Reading from the N-terminus, the 505-residue chain is Lysine--tRNA ligase, heat inducible (505 aa).

2 positions are modified to N6-acetyllysine: lysine 114 and lysine 156. The Mg(2+) site is built by glutamate 415 and glutamate 422.

It belongs to the class-II aminoacyl-tRNA synthetase family. As to quaternary structure, homodimer. It depends on Mg(2+) as a cofactor.

The protein resides in the cytoplasm. It catalyses the reaction tRNA(Lys) + L-lysine + ATP = L-lysyl-tRNA(Lys) + AMP + diphosphate. The chain is Lysine--tRNA ligase, heat inducible (lysU) from Escherichia coli O6:H1 (strain CFT073 / ATCC 700928 / UPEC).